The sequence spans 753 residues: 5-methyltetrahydropteroyltriglutamate--homocysteine methyltransferase (753 aa).

Residues 17-20 (RELK) and K117 each bind 5-methyltetrahydropteroyltri-L-glutamate. L-homocysteine contacts are provided by residues 431 to 433 (IGS) and E484. L-methionine contacts are provided by residues 431 to 433 (IGS) and E484. 5-methyltetrahydropteroyltri-L-glutamate contacts are provided by residues 515–516 (RC) and W561. L-homocysteine is bound at residue D599. L-methionine is bound at residue D599. E605 contributes to the 5-methyltetrahydropteroyltri-L-glutamate binding site. The Zn(2+) site is built by H641, C643, and E665. H694 (proton donor) is an active-site residue. C726 lines the Zn(2+) pocket.

This sequence belongs to the vitamin-B12 independent methionine synthase family. Requires Zn(2+) as cofactor.

It catalyses the reaction 5-methyltetrahydropteroyltri-L-glutamate + L-homocysteine = tetrahydropteroyltri-L-glutamate + L-methionine. Its pathway is amino-acid biosynthesis; L-methionine biosynthesis via de novo pathway; L-methionine from L-homocysteine (MetE route): step 1/1. In terms of biological role, catalyzes the transfer of a methyl group from 5-methyltetrahydrofolate to homocysteine resulting in methionine formation. The polypeptide is 5-methyltetrahydropteroyltriglutamate--homocysteine methyltransferase (Klebsiella pneumoniae (strain 342)).